We begin with the raw amino-acid sequence, 385 residues long: DNA replication and repair protein RecF (385 aa).

30–37 (GPNGYGKT) is an ATP binding site.

Belongs to the RecF family.

The protein localises to the cytoplasm. In terms of biological role, the RecF protein is involved in DNA metabolism; it is required for DNA replication and normal SOS inducibility. RecF binds preferentially to single-stranded, linear DNA. It also seems to bind ATP. The polypeptide is DNA replication and repair protein RecF (Mycobacterium tuberculosis (strain ATCC 25177 / H37Ra)).